A 77-amino-acid polypeptide reads, in one-letter code: Exodeoxyribonuclease 7 small subunit (77 aa).

It belongs to the XseB family. In terms of assembly, heterooligomer composed of large and small subunits.

The protein resides in the cytoplasm. It carries out the reaction Exonucleolytic cleavage in either 5'- to 3'- or 3'- to 5'-direction to yield nucleoside 5'-phosphates.. Functionally, bidirectionally degrades single-stranded DNA into large acid-insoluble oligonucleotides, which are then degraded further into small acid-soluble oligonucleotides. In Clostridium acetobutylicum (strain ATCC 824 / DSM 792 / JCM 1419 / IAM 19013 / LMG 5710 / NBRC 13948 / NRRL B-527 / VKM B-1787 / 2291 / W), this protein is Exodeoxyribonuclease 7 small subunit.